We begin with the raw amino-acid sequence, 371 residues long: RNA-binding protein 48 (371 aa).

The RRM domain occupies 46–124 (QYLLIQGVPA…GLLHVCYAPE (79 aa)). Disordered stretches follow at residues 157-191 (KPVP…PESP) and 348-371 (VPKP…RRRI). Positions 158-170 (PVPEQKGTKDSRQ) are enriched in basic and acidic residues.

It belongs to the RBM48 family. In terms of assembly, component of the minor spliceosome. Within this complex, interacts with ARMC7 and PRPF8/PRP8.

Functionally, as a component of the minor spliceosome, involved in the splicing of U12-type introns in pre-mRNAs. This chain is RNA-binding protein 48 (Rbm48), found in Mus musculus (Mouse).